Reading from the N-terminus, the 246-residue chain is MGGAMSIYLGVNIDHIATLRQARKTRYPSPVEAALAAETAGADSITLHLREDRRHIQDADVTILRQTLKTKMNLEMAVTEEMLGIALETRPSDVCLVPEKREELTTEGGLDVAGQQAKMRDACARLGDAGIRVSLFIDADFAQLDAAHAAGAPVVEIHTGHYADAASDAARAAEFERIRRAVAYGRSLGLTVNAGHGLTYHNVQPIAALPGIHELNIGHAIVAQALFVGWKEAVAEMKRLMVAAAG.

N12 serves as a coordination point for 3-amino-2-oxopropyl phosphate. 14–15 (DH) serves as a coordination point for 1-deoxy-D-xylulose 5-phosphate. R23 is a 3-amino-2-oxopropyl phosphate binding site. H48 (proton acceptor) is an active-site residue. Residues R50 and H55 each contribute to the 1-deoxy-D-xylulose 5-phosphate site. The active-site Proton acceptor is E75. T105 is a binding site for 1-deoxy-D-xylulose 5-phosphate. The active-site Proton donor is the H196. Residues G197 and 218 to 219 (GH) each bind 3-amino-2-oxopropyl phosphate.

This sequence belongs to the PNP synthase family. As to quaternary structure, homooctamer; tetramer of dimers.

The protein resides in the cytoplasm. The enzyme catalyses 3-amino-2-oxopropyl phosphate + 1-deoxy-D-xylulose 5-phosphate = pyridoxine 5'-phosphate + phosphate + 2 H2O + H(+). It participates in cofactor biosynthesis; pyridoxine 5'-phosphate biosynthesis; pyridoxine 5'-phosphate from D-erythrose 4-phosphate: step 5/5. Catalyzes the complicated ring closure reaction between the two acyclic compounds 1-deoxy-D-xylulose-5-phosphate (DXP) and 3-amino-2-oxopropyl phosphate (1-amino-acetone-3-phosphate or AAP) to form pyridoxine 5'-phosphate (PNP) and inorganic phosphate. The chain is Pyridoxine 5'-phosphate synthase from Thiobacillus denitrificans (strain ATCC 25259 / T1).